A 396-amino-acid chain; its full sequence is Elongation factor Tu (396 aa).

The tr-type G domain occupies 10–206 (KPHVNVGTIG…ALDTYIPTPE (197 aa)). Residues 19-26 (GHVDHGKT) are G1. 19–26 (GHVDHGKT) lines the GTP pocket. Threonine 26 is a Mg(2+) binding site. A G2 region spans residues 60 to 64 (GITIN). A G3 region spans residues 81–84 (DCPG). Residues 81–85 (DCPGH) and 136–139 (NKCD) contribute to the GTP site. The interval 136–139 (NKCD) is G4. The G5 stretch occupies residues 174–176 (SAK).

This sequence belongs to the TRAFAC class translation factor GTPase superfamily. Classic translation factor GTPase family. EF-Tu/EF-1A subfamily. As to quaternary structure, monomer.

Its subcellular location is the cytoplasm. The enzyme catalyses GTP + H2O = GDP + phosphate + H(+). GTP hydrolase that promotes the GTP-dependent binding of aminoacyl-tRNA to the A-site of ribosomes during protein biosynthesis. The polypeptide is Elongation factor Tu (Burkholderia cepacia (Pseudomonas cepacia)).